The following is a 235-amino-acid chain: Phosphate-specific transport system accessory protein PhoU homolog 2 (235 aa).

The protein belongs to the PhoU family. As to quaternary structure, homodimer.

The protein resides in the cytoplasm. Its function is as follows. Plays a role in the regulation of phosphate uptake. In Thermotoga maritima (strain ATCC 43589 / DSM 3109 / JCM 10099 / NBRC 100826 / MSB8), this protein is Phosphate-specific transport system accessory protein PhoU homolog 2 (phoU2).